Here is a 339-residue protein sequence, read N- to C-terminus: DNA-directed RNA polymerase subunit alpha (339 aa).

The tract at residues 1–233 (MVREEITGST…DLFLPFLHTE (233 aa)) is alpha N-terminal domain (alpha-NTD). Residues 264 to 339 (KKGIPLNCIF…IDLPKNKFSL (76 aa)) are alpha C-terminal domain (alpha-CTD).

Belongs to the RNA polymerase alpha chain family. In plastids the minimal PEP RNA polymerase catalytic core is composed of four subunits: alpha, beta, beta', and beta''. When a (nuclear-encoded) sigma factor is associated with the core the holoenzyme is formed, which can initiate transcription.

It is found in the plastid. It localises to the chloroplast. The enzyme catalyses RNA(n) + a ribonucleoside 5'-triphosphate = RNA(n+1) + diphosphate. Functionally, DNA-dependent RNA polymerase catalyzes the transcription of DNA into RNA using the four ribonucleoside triphosphates as substrates. The sequence is that of DNA-directed RNA polymerase subunit alpha from Zea mays (Maize).